Consider the following 427-residue polypeptide: Serine--tRNA ligase (427 aa).

Residue 231-233 (TAE) coordinates L-serine. ATP contacts are provided by residues 262-264 (RRE) and V278. An L-serine-binding site is contributed by E285. Residue 349–352 (EVSS) participates in ATP binding. S384 provides a ligand contact to L-serine.

The protein belongs to the class-II aminoacyl-tRNA synthetase family. Type-1 seryl-tRNA synthetase subfamily. Homodimer. The tRNA molecule binds across the dimer.

It localises to the cytoplasm. The enzyme catalyses tRNA(Ser) + L-serine + ATP = L-seryl-tRNA(Ser) + AMP + diphosphate + H(+). It carries out the reaction tRNA(Sec) + L-serine + ATP = L-seryl-tRNA(Sec) + AMP + diphosphate + H(+). Its pathway is aminoacyl-tRNA biosynthesis; selenocysteinyl-tRNA(Sec) biosynthesis; L-seryl-tRNA(Sec) from L-serine and tRNA(Sec): step 1/1. Catalyzes the attachment of serine to tRNA(Ser). Is also able to aminoacylate tRNA(Sec) with serine, to form the misacylated tRNA L-seryl-tRNA(Sec), which will be further converted into selenocysteinyl-tRNA(Sec). The sequence is that of Serine--tRNA ligase from Chlamydia pneumoniae (Chlamydophila pneumoniae).